A 154-amino-acid polypeptide reads, in one-letter code: Ribonuclease P protein subunit p21 (154 aa).

Ala2 is subject to N-acetylalanine. Cys62, Cys65, Cys92, and Cys95 together coordinate Zn(2+). A disordered region spans residues 117-154 (QLGSQADSKPLQPLPNTAHSISDRLPEEKMQTQGSSNQ). Over residues 137–146 (ISDRLPEEKM) the composition is skewed to basic and acidic residues.

Belongs to the eukaryotic/archaeal RNase P protein component 4 family. As to quaternary structure, RNase P consists of a catalytic RNA moiety and about 10 protein subunits; POP1, POP4, POP5, POP7, RPP14, RPP21, RPP25, RPP30, RPP38 and RPP40. Within the RNase P complex, POP1, POP7 and RPP25 form the 'finger' subcomplex, POP5, RPP14, RPP40 and homodimeric RPP30 form the 'palm' subcomplex, and RPP21, POP4 and RPP38 form the 'wrist' subcomplex. All subunits of the RNase P complex interact with the catalytic RNA.

It localises to the nucleus. Its subcellular location is the nucleolus. In terms of biological role, component of ribonuclease P, a ribonucleoprotein complex that generates mature tRNA molecules by cleaving their 5'-ends. The protein is Ribonuclease P protein subunit p21 (RPP21) of Homo sapiens (Human).